Consider the following 638-residue polypeptide: Sodium- and chloride-dependent glycine transporter 1 (638 aa).

Residues 1–30 (MAVAHGPVATSSPEQNGAVPSEATKKDQNL) are disordered. The Cytoplasmic segment spans residues 1–40 (MAVAHGPVATSSPEQNGAVPSEATKKDQNLTRGNWGNQIE). 3 helical membrane-spanning segments follow: residues 41–61 (FVLTSVGYAVGLGNVWRFPYL), 68–88 (GAFMFPYFIMLVFCGIPLFFM), and 120–140 (VSTYIGIYYNVVICIAFYYFF). At 141–217 (SSMTHVLPWA…LSDDIGDFGE (77 aa)) the chain is on the extracellular side. Residues Asn169, Asn172, Asn182, and Asn188 are each glycosylated (N-linked (GlcNAc...) asparagine). The next 9 helical transmembrane spans lie at 218–238 (VRLPLLGCLGVSWVVVFLCLI), 247–267 (VVYFTATFPYVVLTILFVRGV), 292–312 (VWGDAASQIFYSLGCAWGGLI), 339–359 (SVYAGFVIFSILGFMANHLGV), 382–402 (LLPISPLWSLLFFFMLILLGL), 438–458 (VAGFLLGIPLTSQAGIYWLLL), 462–482 (YAASFSLVVISCIMCVSIMYI), 502–522 (LFFQICWRFVSPTIIFFILIF), and 542–562 (VAIGFLMALSSVICIPLYALF). Over 563–638 (QLCRTDGDTL…GSSRLQDSRI (76 aa)) the chain is Cytoplasmic. Thr603 is subject to Phosphothreonine. Phosphoserine is present on residues Ser605 and Ser630. An essential for interaction with EXOC1 region spans residues 627–638 (SNGSSRLQDSRI).

It belongs to the sodium:neurotransmitter symporter (SNF) (TC 2.A.22) family. SLC6A9 subfamily. In terms of assembly, interacts with EXOC1; interaction increases the transporter capacity of SLC6A9 probably by promoting its insertion into the cell membrane. Interacts with EXOC3 and EXOC4. In terms of tissue distribution, found only in the white matter of the CNS. Found in the gray matter of CNS as well as in macrophages and mast cells in peripheral tissues.

It is found in the cell membrane. It catalyses the reaction glycine(out) + chloride(out) + 2 Na(+)(out) = glycine(in) + chloride(in) + 2 Na(+)(in). With respect to regulation, inhibited by sarcosine. In terms of biological role, sodium- and chloride-dependent glycine transporter. Essential for regulating glycine concentrations at inhibitory glycinergic synapses. The polypeptide is Sodium- and chloride-dependent glycine transporter 1 (Slc6a9) (Rattus norvegicus (Rat)).